We begin with the raw amino-acid sequence, 388 residues long: Chalcone synthase D (388 aa).

Cysteine 164 is an active-site residue.

Belongs to the thiolase-like superfamily. Chalcone/stilbene synthases family.

It catalyses the reaction (E)-4-coumaroyl-CoA + 3 malonyl-CoA + 3 H(+) = 2',4,4',6'-tetrahydroxychalcone + 3 CO2 + 4 CoA. It functions in the pathway secondary metabolite biosynthesis; flavonoid biosynthesis. In terms of biological role, the primary product of this enzyme is 4,2',4',6'-tetrahydroxychalcone (also termed naringenin-chalcone or chalcone) which can under specific conditions spontaneously isomerize into naringenin. In Ipomoea nil (Japanese morning glory), this protein is Chalcone synthase D (CHSD).